The following is a 563-amino-acid chain: Urocanate hydratase (563 aa).

Residues 53–54 (GG), Q131, 177–179 (GMG), E197, R202, 243–244 (NA), 264–268 (QTSAH), 274–275 (YL), and Y323 each bind NAD(+). C411 is an active-site residue. An NAD(+)-binding site is contributed by G493.

This sequence belongs to the urocanase family. It depends on NAD(+) as a cofactor.

It localises to the cytoplasm. The enzyme catalyses 4-imidazolone-5-propanoate = trans-urocanate + H2O. Its pathway is amino-acid degradation; L-histidine degradation into L-glutamate; N-formimidoyl-L-glutamate from L-histidine: step 2/3. In terms of biological role, catalyzes the conversion of urocanate to 4-imidazolone-5-propionate. This is Urocanate hydratase from Yersinia enterocolitica serotype O:8 / biotype 1B (strain NCTC 13174 / 8081).